The chain runs to 620 residues: MDSHTLVQALIYLGSAALIVPIAVRLGLGSVLGYLIAGCIIGPWGLRLVTDAESILHFAEIGVVLMLFIIGLELDPQRLWKLRAAVFGGGALQMVICGGLLGLFCMLLGLRWQVAELIGMTLALSSTAIAMQAMNERNLMVTQMGRSAFAVLLFQDIAAIPLVAMIPLLATSSASTTMGAFALSALKVAGALVLVVLLGRYVTRPALRFVARSGLREVFSAVALFLVFGFGLLLEEVGLSMAMGAFLAGVLLASSEYRHALESDIEPFKGLLLGLFFIGVGMSIDFGTLLENPLRIVILLLGFLIIKIAMLWLIARPLQVPNKQRRWFAVLLGQGSEFAFVVFGAAQMANVLEPEWAKSLTLAVALSMAATPILLVILNRLEQSSTEEAREADEIDEEQPRVIIAGFGRFGQITGRLLLSSGVKMVVLDHDPDHIETLRKFGMKVFYGDATRMDLLESAGAAKAEVLINAIDDPQTNLQLTEMVKEHFPHLQIIARARDVDHYIRLRQAGVEKPERETFEGALKTGRLALESLGLGPYEARERADVFRRFNIQMVEEMAMVENDTKARAAVYKRTSAMLSEIITEDREHLSLIQRHGWQGTEEGKHTGNMADEPETKPSS.

Transmembrane regions (helical) follow at residues 4–24 (HTLV…PIAV), 26–46 (LGLG…PWGL), 54–74 (SILH…GLEL), 90–110 (GALQ…LLGL), 114–134 (VAEL…MQAM), 149–169 (FAVL…IPLL), 178–198 (MGAF…VVLL), 218–238 (VFSA…EEVG), 270–290 (GLLL…GTLL), 294–314 (LRIV…LWLI), 327–347 (WFAV…GAAQ), and 359–379 (SLTL…VILN). The region spanning 399 to 518 (QPRVIIAGFG…AGVEKPERET (120 aa)) is the RCK N-terminal domain. The segment at 597–620 (GWQGTEEGKHTGNMADEPETKPSS) is disordered.

This sequence belongs to the monovalent cation:proton antiporter 2 (CPA2) transporter (TC 2.A.37) family. KefC subfamily. In terms of assembly, homodimer. Interacts with the regulatory subunit KefF.

The protein resides in the cell inner membrane. Its function is as follows. Pore-forming subunit of a potassium efflux system that confers protection against electrophiles. Catalyzes K(+)/H(+) antiport. The chain is Glutathione-regulated potassium-efflux system protein KefC from Escherichia coli O139:H28 (strain E24377A / ETEC).